The following is a 241-amino-acid chain: uncharacterized protein (241 aa).

Residues 78-80 (TSA), Gly111, Ile131, and 138-140 (SSL) each bind S-adenosyl-L-methionine.

Belongs to the class IV-like SAM-binding methyltransferase superfamily. RNA methyltransferase TrmH family.

This is an uncharacterized protein from Haemophilus influenzae (strain ATCC 51907 / DSM 11121 / KW20 / Rd).